The sequence spans 231 residues: Sensory transduction protein BceR (231 aa).

One can recognise a Response regulatory domain in the interval 3 to 116 (KLLLIEDDES…VLIAKIQAMF (114 aa)). At D52 the chain carries 4-aspartylphosphate. The ompR/PhoB-type DNA-binding region spans 127–225 (STIKTWCGAA…KVGQGYIAKE (99 aa)).

Phosphorylated by BceS.

The protein resides in the cytoplasm. In terms of biological role, member of the two-component regulatory system BceS/BceR involved in the regulation of bacitracin resistance. When activated by BceS, binds to the upstream region of the bceAB promoter and up-regulates the expression of these two genes. The chain is Sensory transduction protein BceR (bceR) from Bacillus subtilis (strain 168).